Consider the following 323-residue polypeptide: DNA-directed RNA polymerase subunit alpha 1 (323 aa).

Positions 1–228 (MSNNNSKLEF…EQISVFVSLR (228 aa)) are alpha N-terminal domain (alpha-NTD). An alpha C-terminal domain (alpha-CTD) region spans residues 244–323 (IDPILLKPID…DNFRELVEGK (80 aa)).

The protein belongs to the RNA polymerase alpha chain family. Homodimer. The RNAP catalytic core consists of 2 alpha, 1 beta, 1 beta' and 1 omega subunit. When a sigma factor is associated with the core the holoenzyme is formed, which can initiate transcription.

The catalysed reaction is RNA(n) + a ribonucleoside 5'-triphosphate = RNA(n+1) + diphosphate. Functionally, DNA-dependent RNA polymerase catalyzes the transcription of DNA into RNA using the four ribonucleoside triphosphates as substrates. This is DNA-directed RNA polymerase subunit alpha 1 from Francisella tularensis subsp. tularensis (strain FSC 198).